Here is a 364-residue protein sequence, read N- to C-terminus: Histidinol-phosphate aminotransferase 1 (364 aa).

Position 211 is an N6-(pyridoxal phosphate)lysine (Lys211).

This sequence belongs to the class-II pyridoxal-phosphate-dependent aminotransferase family. Histidinol-phosphate aminotransferase subfamily. In terms of assembly, homodimer. Requires pyridoxal 5'-phosphate as cofactor.

The enzyme catalyses L-histidinol phosphate + 2-oxoglutarate = 3-(imidazol-4-yl)-2-oxopropyl phosphate + L-glutamate. It participates in amino-acid biosynthesis; L-histidine biosynthesis; L-histidine from 5-phospho-alpha-D-ribose 1-diphosphate: step 7/9. In Legionella pneumophila (strain Lens), this protein is Histidinol-phosphate aminotransferase 1.